The chain runs to 555 residues: Glutamine--tRNA ligase (555 aa).

The 'HIGH' region signature appears at 34 to 44 (PEPNGYLHIGH). Residues 35 to 37 (EPN) and 41 to 47 (HIGHAKS) each bind ATP. 2 residues coordinate L-glutamine: aspartate 67 and tyrosine 212. ATP-binding positions include threonine 231, 261 to 262 (RL), and 269 to 271 (MSK). The 'KMSKS' region signature appears at 268 to 272 (VMSKR).

Belongs to the class-I aminoacyl-tRNA synthetase family. As to quaternary structure, monomer.

The protein localises to the cytoplasm. The catalysed reaction is tRNA(Gln) + L-glutamine + ATP = L-glutaminyl-tRNA(Gln) + AMP + diphosphate. This Proteus mirabilis (strain HI4320) protein is Glutamine--tRNA ligase.